Here is a 156-residue protein sequence, read N- to C-terminus: MSASLISALPPCGNEPPMPDEWRLYRLATRLSTFANWPFTEDCACTPERMAEAGFVHCPSDNSPDVVKCFFCLKELEGWQPEDDPMDEHKKHSPSCLFIALKKKAEELTLSEFLKLDLERTKIKMQKQMNQHIENFQAKANVVRGHLEKLDADETQ.

A BIR repeat occupies 30 to 100 (RLSTFANWPF…KHSPSCLFIA (71 aa)). T46 is modified (phosphothreonine; by CDK1). The Zn(2+) site is built by C69, C72, H89, and C96.

This sequence belongs to the IAP family. As to quaternary structure, component of the CPC at least composed of survivin/birc5, incenp, cdca8/borealin and/or cdca9/dasra-A, and aurkb/aurora-B. Interacts directly with incenp (via N-terminus). Interacts with rxra; the interaction is stronger in the absence of 9-cis retinoic acids. Post-translationally, ubiquitination is required for centrosome-targeting.

It localises to the cytoplasm. Its subcellular location is the nucleus. The protein localises to the chromosome. The protein resides in the centromere. It is found in the cytoskeleton. It localises to the spindle. Component of the chromosomal passenger complex (CPC), a complex that acts as a key regulator of mitosis. The CPC complex has essential functions at the centromere in ensuring correct chromosome alignment and segregation and is required for chromatin-induced microtubule stabilization and spindle assembly. Does not appear to exhibit anti-apoptotic activity. Plays a role in increasing blood vessel size during development. This Xenopus tropicalis (Western clawed frog) protein is Baculoviral IAP repeat-containing protein 5.2 (birc5.2).